The following is a 244-amino-acid chain: MVEGMLKTNFRLLFLLIFLLIPTPVLAMHIMEGFLPVKWVIFWDLVTLPFIMVGFIRLQREATQGPGAKLMLAFAGAFIFVLSALKMPSVTGSCSHPTGTGLAAILFGPFITTVLGFIVLIFQALLLAHGGLTTLGANTFSMAVAGPLVAYGVYKGLQKAGINSNFSIFLAAMLGDLVTYIVTSVQLALAFPGSSLFLSALKFMGIFALTQIPLAISEGILTVLTYNFLSRYEDAKIWVEKGEH.

The first 27 residues, methionine 1–alanine 27, serve as a signal peptide directing secretion. 6 consecutive transmembrane segments (helical) span residues proline 36–isoleucine 56, glycine 65–leucine 85, leucine 102–phenylalanine 122, threonine 134–tyrosine 154, isoleucine 168–alanine 188, and leucine 196–isoleucine 216.

It belongs to the CbiM family. Forms an energy-coupling factor (ECF) transporter complex composed of an ATP-binding protein (A component, CbiO), a transmembrane protein (T component, CbiQ) and 2 possible substrate-capture proteins (S components, CbiM and CbiN) of unknown stoichimetry.

Its subcellular location is the cell membrane. The protein operates within cofactor biosynthesis; adenosylcobalamin biosynthesis. Its function is as follows. Part of the energy-coupling factor (ECF) transporter complex CbiMNOQ involved in cobalt import. This is Cobalt transport protein CbiM from Carboxydothermus hydrogenoformans (strain ATCC BAA-161 / DSM 6008 / Z-2901).